Consider the following 205-residue polypeptide: LexA repressor (205 aa).

The segment at residues 28-48 is a DNA-binding region (H-T-H motif); that stretch reads VREIGEAVGLASSSTVHGHLA. Catalysis depends on for autocatalytic cleavage activity residues Ser-127 and Lys-165.

It belongs to the peptidase S24 family. In terms of assembly, homodimer. In terms of processing, following treatment with mitomycin C protein levels begin to decrease after a 5-min lag and do not return to their original levels for at least 90 minutes.

It carries out the reaction Hydrolysis of Ala-|-Gly bond in repressor LexA.. Functionally, represses dinA, dinB, dinC, recA genes and itself by binding to the 14 bp palindromic sequence 5'-CGAACNNNNGTTCG-3'; some genes have a tandem consensus sequence and their binding is cooperative. In the presence of single-stranded DNA, RecA interacts with LexA causing an autocatalytic cleavage which disrupts the DNA-binding part of LexA, leading to derepression of the SOS regulon and eventually DNA repair; autocleavage is maximal at pH 11 in the absence of RecA and ssDNA. The chain is LexA repressor from Bacillus subtilis (strain 168).